The following is a 230-amino-acid chain: Cytidylate kinase (230 aa).

Residue 12 to 20 participates in ATP binding; it reads GPSGAGKGT.

This sequence belongs to the cytidylate kinase family. Type 1 subfamily.

The protein localises to the cytoplasm. It carries out the reaction CMP + ATP = CDP + ADP. It catalyses the reaction dCMP + ATP = dCDP + ADP. This chain is Cytidylate kinase, found in Yersinia pseudotuberculosis serotype O:1b (strain IP 31758).